The sequence spans 230 residues: uncharacterized protein (230 aa).

Residues 12–80 (KNLSYVLAEK…PRIGTRVMPQ (69 aa)) enclose the HTH gntR-type domain. Residues 40-59 (EIELGEQFGVSRTAVREAVK) constitute a DNA-binding region (H-T-H motif).

This is an uncharacterized protein from Escherichia coli (strain K12).